Here is a 531-residue protein sequence, read N- to C-terminus: Tyrosine/DOPA decarboxylase 2 (531 aa).

The residue at position 319 (K319) is an N6-(pyridoxal phosphate)lysine.

It belongs to the group II decarboxylase family. In terms of assembly, homodimer. Pyridoxal 5'-phosphate serves as cofactor. Predominantly expressed in the roots and stems, while a lower level expression is seen in the sepals and carpels of fully expanded flowers.

The enzyme catalyses L-tyrosine + H(+) = tyramine + CO2. It catalyses the reaction L-dopa + H(+) = dopamine + CO2. It carries out the reaction 5-hydroxy-L-tryptophan + H(+) = serotonin + CO2. In terms of biological role, marginally higher substrate specificity for L-DOPA over L-tyrosine. The protein is Tyrosine/DOPA decarboxylase 2 (TYDC2) of Papaver somniferum (Opium poppy).